Here is a 246-residue protein sequence, read N- to C-terminus: Pyridoxine 5'-phosphate synthase (246 aa).

Residues N8 and R19 each contribute to the 3-amino-2-oxopropyl phosphate site. Catalysis depends on H44, which acts as the Proton acceptor. 2 residues coordinate 1-deoxy-D-xylulose 5-phosphate: R46 and H51. E76 (proton acceptor) is an active-site residue. T106 is a 1-deoxy-D-xylulose 5-phosphate binding site. H198 acts as the Proton donor in catalysis. 3-amino-2-oxopropyl phosphate contacts are provided by residues D199 and 221–222 (GH).

The protein belongs to the PNP synthase family. Homooctamer; tetramer of dimers.

The protein resides in the cytoplasm. The enzyme catalyses 3-amino-2-oxopropyl phosphate + 1-deoxy-D-xylulose 5-phosphate = pyridoxine 5'-phosphate + phosphate + 2 H2O + H(+). It functions in the pathway cofactor biosynthesis; pyridoxine 5'-phosphate biosynthesis; pyridoxine 5'-phosphate from D-erythrose 4-phosphate: step 5/5. Functionally, catalyzes the complicated ring closure reaction between the two acyclic compounds 1-deoxy-D-xylulose-5-phosphate (DXP) and 3-amino-2-oxopropyl phosphate (1-amino-acetone-3-phosphate or AAP) to form pyridoxine 5'-phosphate (PNP) and inorganic phosphate. The protein is Pyridoxine 5'-phosphate synthase of Brucella suis (strain ATCC 23445 / NCTC 10510).